Here is a 391-residue protein sequence, read N- to C-terminus: Protein CAJ1 (391 aa).

The region spanning 4–73 (ETEYYDILGI…RSKYDQFGKE (70 aa)) is the J domain. The disordered stretch occupies residues 119-161 (KEDEEGTAATETEKADESTDGGMVKHDTNKAESLKKDKLSKEQ). Residues 129 to 161 (ETEKADESTDGGMVKHDTNKAESLKKDKLSKEQ) are compositionally biased toward basic and acidic residues. Residue lysine 132 forms a Glycyl lysine isopeptide (Lys-Gly) (interchain with G-Cter in ubiquitin) linkage.

The chain is Protein CAJ1 (CAJ1) from Saccharomyces cerevisiae (strain ATCC 204508 / S288c) (Baker's yeast).